Reading from the N-terminus, the 179-residue chain is Adenine phosphoribosyltransferase (179 aa).

This sequence belongs to the purine/pyrimidine phosphoribosyltransferase family. As to quaternary structure, homodimer.

Its subcellular location is the cytoplasm. The enzyme catalyses AMP + diphosphate = 5-phospho-alpha-D-ribose 1-diphosphate + adenine. The protein operates within purine metabolism; AMP biosynthesis via salvage pathway; AMP from adenine: step 1/1. Functionally, catalyzes a salvage reaction resulting in the formation of AMP, that is energically less costly than de novo synthesis. This Azorhizobium caulinodans (strain ATCC 43989 / DSM 5975 / JCM 20966 / LMG 6465 / NBRC 14845 / NCIMB 13405 / ORS 571) protein is Adenine phosphoribosyltransferase.